The primary structure comprises 1169 residues: DNA-directed RNA polymerase subunit beta (1169 aa).

It belongs to the RNA polymerase beta chain family. The RNAP catalytic core consists of 2 alpha, 1 beta, 1 beta' and 1 omega subunit. When a sigma factor is associated with the core the holoenzyme is formed, which can initiate transcription. Interacts with RbpA, which partially restores Rif-inhibited transcription.

It carries out the reaction RNA(n) + a ribonucleoside 5'-triphosphate = RNA(n+1) + diphosphate. Functionally, DNA-dependent RNA polymerase catalyzes the transcription of DNA into RNA using the four ribonucleoside triphosphates as substrates. This subunit often mutates to generate rifampicin (Rif) resistance. Interaction with RbpA partially restores Rif-inhibited transcription; once the subunit is Rif-resistant however RbpA no longer stimulates transcription. The chain is DNA-directed RNA polymerase subunit beta from Mycolicibacterium smegmatis (strain ATCC 700084 / mc(2)155) (Mycobacterium smegmatis).